The sequence spans 89 residues: Small ribosomal subunit protein uS15 (89 aa).

The span at 1–21 (MAITQERKNQLISEFKTHESD) shows a compositional bias: basic and acidic residues. The disordered stretch occupies residues 1–23 (MAITQERKNQLISEFKTHESDTG).

The protein belongs to the universal ribosomal protein uS15 family. In terms of assembly, part of the 30S ribosomal subunit. Forms a bridge to the 50S subunit in the 70S ribosome, contacting the 23S rRNA.

In terms of biological role, one of the primary rRNA binding proteins, it binds directly to 16S rRNA where it helps nucleate assembly of the platform of the 30S subunit by binding and bridging several RNA helices of the 16S rRNA. Functionally, forms an intersubunit bridge (bridge B4) with the 23S rRNA of the 50S subunit in the ribosome. This chain is Small ribosomal subunit protein uS15, found in Bacillus velezensis (strain DSM 23117 / BGSC 10A6 / LMG 26770 / FZB42) (Bacillus amyloliquefaciens subsp. plantarum).